The following is a 329-amino-acid chain: DNA-directed RNA polymerase subunit alpha (329 aa).

The alpha N-terminal domain (alpha-NTD) stretch occupies residues 1 to 235; sequence MQGSVTEFLK…EQLEAFVDLR (235 aa). The alpha C-terminal domain (alpha-CTD) stretch occupies residues 249 to 329; that stretch reads FDPILLRPVD…NWPPASIADE (81 aa).

It belongs to the RNA polymerase alpha chain family. Homodimer. The RNAP catalytic core consists of 2 alpha, 1 beta, 1 beta' and 1 omega subunit. When a sigma factor is associated with the core the holoenzyme is formed, which can initiate transcription.

The enzyme catalyses RNA(n) + a ribonucleoside 5'-triphosphate = RNA(n+1) + diphosphate. In terms of biological role, DNA-dependent RNA polymerase catalyzes the transcription of DNA into RNA using the four ribonucleoside triphosphates as substrates. The protein is DNA-directed RNA polymerase subunit alpha of Photorhabdus laumondii subsp. laumondii (strain DSM 15139 / CIP 105565 / TT01) (Photorhabdus luminescens subsp. laumondii).